The primary structure comprises 435 residues: Elongation factor 1-alpha (435 aa).

One can recognise a tr-type G domain in the interval 4–229; it reads KPHLNLIVIG…DQLEIPPKPV (226 aa). Positions 13-20 are G1; the sequence is GHVDHGKS. Residue 13–20 participates in GTP binding; it reads GHVDHGKS. Ser-20 lines the Mg(2+) pocket. The interval 69–73 is G2; that stretch reads GVTIN. The interval 90–93 is G3; that stretch reads DAPG. GTP contacts are provided by residues 90–94 and 152–155; these read DAPGH and NKMD. The interval 152-155 is G4; it reads NKMD. The tract at residues 193-195 is G5; sequence VAP.

It belongs to the TRAFAC class translation factor GTPase superfamily. Classic translation factor GTPase family. EF-Tu/EF-1A subfamily.

It is found in the cytoplasm. The enzyme catalyses GTP + H2O = GDP + phosphate + H(+). In terms of biological role, GTP hydrolase that promotes the GTP-dependent binding of aminoacyl-tRNA to the A-site of ribosomes during protein biosynthesis. The protein is Elongation factor 1-alpha of Sulfolobus acidocaldarius (strain ATCC 33909 / DSM 639 / JCM 8929 / NBRC 15157 / NCIMB 11770).